The sequence spans 132 residues: Major pollen allergen Art v 1 (132 aa).

The first 24 residues, 1-24, serve as a signal peptide directing secretion; sequence MAKCSYVFCAVLLIFIVAIGEMEA. A defensin-like domain region spans residues 28 to 77; that stretch reads KLCEKTSKTYSGKCDNKKCDKKCIEWEKAQHGACHKREAGKESCFCYFDC. 4 disulfide bridges follow: cysteine 30–cysteine 77, cysteine 41–cysteine 61, cysteine 46–cysteine 71, and cysteine 50–cysteine 73. 2 epitope recognized by IgE antibodies of mugwort pollen-sensitized patients regions span residues 64–70 and 79–87; these read REAGKES and KSPPGATPA. The interval 81 to 132 is disordered; that stretch reads PPGATPAPPGAAPPPAAGGSPSPPADGGSPPPPADGGSPPVDGGSPPPPSTH. Over residues 83 to 114 the composition is skewed to pro residues; that stretch reads GATPAPPGAAPPPAAGGSPSPPADGGSPPPPA. Over residues 115 to 124 the composition is skewed to low complexity; that stretch reads DGGSPPVDGG.

The protein in the N-terminal section; belongs to the DEFL family. In terms of processing, the mature protein extracted from the plant exhibits an average rate of 76% of hydroxyprolines. Post-translationally, O-glycosylated. O-linkage of 3 galactoses plus 9-16 or 21-23 arabinose residues attached on one or two hydroxyprolines.

The protein resides in the secreted. The polypeptide is Major pollen allergen Art v 1 (Artemisia vulgaris (Mugwort)).